A 488-amino-acid chain; its full sequence is Mannitol 2-dehydrogenase (488 aa).

Residue 37–48 (IVHVGVGGFHRA) participates in NAD(+) binding.

This sequence belongs to the mannitol dehydrogenase family. Monomer.

The enzyme catalyses D-mannitol + NAD(+) = D-fructose + NADH + H(+). Catalyzes the NAD(H)-dependent interconversion of D-fructose and D-mannitol in the mannitol metabolic pathway. In Aspergillus niger (strain ATCC MYA-4892 / CBS 513.88 / FGSC A1513), this protein is Mannitol 2-dehydrogenase.